The chain runs to 215 residues: uncharacterized protein (215 aa).

Transmembrane regions (helical) follow at residues 40–60 and 72–92; these read VLFP…FCSL and LIWF…VGYL.

The protein resides in the mitochondrion membrane. This is an uncharacterized protein from Arabidopsis thaliana (Mouse-ear cress).